Here is a 603-residue protein sequence, read N- to C-terminus: MPRFITELKRTHSCGELTKADIGKEVVLFGWVNNRRDHGGAVFIDLRDRAGLTQVVFEEDVRPDVHELAGQLRLEYCVGVRGKVVSRGGNVNPKLRTGEIEVHASDLEIFNRSEPAPFQIEDEIDTGEEKRLQYRYLDLRRAPLQRTLMTRAKVNHLTRNYFTDGGFLELETPFMVKYTPGGARNFLVPSRLNPGKFYALAESPQLFKQLYMMAGFDRYFQIVRCFRDEDLRLDRQPEFTQIDVEMSFVEQNDVFDVMEGLVVKLWKEVLGIEIPRPFQRMPFEESMAKYGNDKPDLRFDMPHVVLTDLVRQHDGGGVPLMHEAVKGKGIVKAMRVPASANFSRTEIDKLEEYVKGMGAKGLARAKVGEGGEWTQSPLAKTITPALRQAINEACEAKPGDLLLFQFGKDSVVHTVMANLRVHLAKRMGLIPEYGSGGAWRFLWVVNPPLFEYDEESGQWAAAHHAFTRPHDSDLQFLESDPGKVNCYRYDLVLNGFEIGGGSIRLHDPEVQARVFKAMGISDEEARSKFGFLLDALKMGAPPHGGIALGMDRLVMLLTGAESLRDVVAWPKTQKGTDLMTGAPGDVDARQLRELYVKSTYEPK.

The segment at 205–208 (QLFK) is aspartate. Arg-227 contributes to the L-aspartate binding site. ATP-binding positions include 227–229 (RDE) and Gln-236. Residue His-463 coordinates L-aspartate. Glu-497 provides a ligand contact to ATP. Residue Arg-504 participates in L-aspartate binding. 549–552 (GMDR) contacts ATP.

This sequence belongs to the class-II aminoacyl-tRNA synthetase family. Type 1 subfamily. As to quaternary structure, homodimer.

The protein resides in the cytoplasm. It catalyses the reaction tRNA(Asx) + L-aspartate + ATP = L-aspartyl-tRNA(Asx) + AMP + diphosphate. Functionally, aspartyl-tRNA synthetase with relaxed tRNA specificity since it is able to aspartylate not only its cognate tRNA(Asp) but also tRNA(Asn). Reaction proceeds in two steps: L-aspartate is first activated by ATP to form Asp-AMP and then transferred to the acceptor end of tRNA(Asp/Asn). The sequence is that of Aspartate--tRNA(Asp/Asn) ligase from Anaeromyxobacter sp. (strain K).